The chain runs to 360 residues: Peptide chain release factor 1 (360 aa).

Q235 is subject to N5-methylglutamine.

This sequence belongs to the prokaryotic/mitochondrial release factor family. Methylated by PrmC. Methylation increases the termination efficiency of RF1.

It localises to the cytoplasm. In terms of biological role, peptide chain release factor 1 directs the termination of translation in response to the peptide chain termination codons UAG and UAA. This chain is Peptide chain release factor 1, found in Dechloromonas aromatica (strain RCB).